Reading from the N-terminus, the 273-residue chain is Bis(5'-nucleosyl)-tetraphosphatase, symmetrical (273 aa).

It belongs to the Ap4A hydrolase family.

It carries out the reaction P(1),P(4)-bis(5'-adenosyl) tetraphosphate + H2O = 2 ADP + 2 H(+). Hydrolyzes diadenosine 5',5'''-P1,P4-tetraphosphate to yield ADP. In Histophilus somni (strain 129Pt) (Haemophilus somnus), this protein is Bis(5'-nucleosyl)-tetraphosphatase, symmetrical.